Consider the following 622-residue polypeptide: Low affinity potassium transport system protein Kup (622 aa).

12 consecutive transmembrane segments (helical) span residues 9-29 (LPAI…TSPL), 49-69 (VFGF…IKYL), 103-123 (VIMG…TPAI), 137-157 (PQLD…LFMI), 165-185 (VGKL…VLGL), 213-233 (VSFI…ALYA), 247-267 (WFTV…ALLL), 276-296 (PFFL…AALA), 337-357 (IYIP…IVSF), 363-383 (LAAA…ILST), 396-416 (LVAL…SANL), and 419-439 (LLSG…IMTT).

Belongs to the HAK/KUP transporter (TC 2.A.72) family.

The protein localises to the cell inner membrane. It catalyses the reaction K(+)(in) + H(+)(in) = K(+)(out) + H(+)(out). Responsible for the low-affinity transport of potassium into the cell. Likely operates as a K(+):H(+) symporter. This is Low affinity potassium transport system protein Kup from Salmonella arizonae (strain ATCC BAA-731 / CDC346-86 / RSK2980).